We begin with the raw amino-acid sequence, 215 residues long: UPF0502 protein YceH (215 aa).

Lys80 bears the N6-acetyllysine mark.

The protein belongs to the UPF0502 family.

This is UPF0502 protein YceH from Shigella boydii serotype 4 (strain Sb227).